Consider the following 273-residue polypeptide: Proteasome subunit beta type-10 (273 aa).

M1 bears the N-acetylmethionine mark. Positions M1–G39 are cleaved as a propeptide — removed in mature form. T40 (nucleophile) is an active-site residue.

It belongs to the peptidase T1B family. As to quaternary structure, the 26S proteasome consists of a 20S proteasome core and two 19S regulatory subunits. The 20S proteasome core is composed of 28 subunits that are arranged in four stacked rings, resulting in a barrel-shaped structure. The two end rings are each formed by seven alpha subunits, and the two central rings are each formed by seven beta subunits. The catalytic chamber with the active sites is on the inside of the barrel. Component of the immunoproteasome, where it displaces the equivalent housekeeping subunit PSMB7. Component of the spermatoproteasome, a form of the proteasome specifically found in testis. Autocleaved. The resulting N-terminal Thr residue of the mature subunit is responsible for the nucleophile proteolytic activity. In terms of tissue distribution, detected in liver (at protein level).

It is found in the cytoplasm. The protein resides in the nucleus. The enzyme catalyses Cleavage of peptide bonds with very broad specificity.. The proteasome is a multicatalytic proteinase complex which is characterized by its ability to cleave peptides with Arg, Phe, Tyr, Leu, and Glu adjacent to the leaving group at neutral or slightly basic pH. The proteasome has an ATP-dependent proteolytic activity. This subunit is involved in antigen processing to generate class I binding peptides. Plays a role in determining the T-cell repertoire for an antiviral T-cell response. The protein is Proteasome subunit beta type-10 (Psmb10) of Mus musculus (Mouse).